The primary structure comprises 267 residues: Phosphate import ATP-binding protein PstB 1 (267 aa).

The ABC transporter domain maps to 21-262 (LETKDLHVYY…AALQSTSDYV (242 aa)). Residue 53–60 (GPSGCGKS) coordinates ATP.

It belongs to the ABC transporter superfamily. Phosphate importer (TC 3.A.1.7) family. In terms of assembly, the complex is composed of two ATP-binding proteins (PstB), two transmembrane proteins (PstC and PstA) and a solute-binding protein (PstS).

Its subcellular location is the cell membrane. It carries out the reaction phosphate(out) + ATP + H2O = ADP + 2 phosphate(in) + H(+). Part of the ABC transporter complex PstSACB involved in phosphate import. Responsible for energy coupling to the transport system. This chain is Phosphate import ATP-binding protein PstB 1, found in Streptococcus thermophilus (strain CNRZ 1066).